Here is a 566-residue protein sequence, read N- to C-terminus: Arginine--tRNA ligase (566 aa).

The 'HIGH' region signature appears at 121–131 (ANPNGPFHIGH).

The protein belongs to the class-I aminoacyl-tRNA synthetase family.

The protein localises to the cytoplasm. It catalyses the reaction tRNA(Arg) + L-arginine + ATP = L-arginyl-tRNA(Arg) + AMP + diphosphate. In Methanococcus maripaludis (strain C6 / ATCC BAA-1332), this protein is Arginine--tRNA ligase.